The chain runs to 240 residues: Protein CDV3 homolog A (240 aa).

Basic and acidic residues predominate over residues 1–15; that stretch reads MAEPQEKSLDDFFAK. A disordered region spans residues 1–204; sequence MAEPQEKSLD…TESRREKEME (204 aa). At Ala-2 the chain carries N-acetylalanine. Over residues 27 to 52 the composition is skewed to low complexity; that stretch reads SGSAAGSRGSARPPDGAPSSSSSMSG. Positions 57-73 are enriched in basic and acidic residues; sequence VKKEKSGKSDNPDQLQE. 2 stretches are compositionally biased toward polar residues: residues 127-141 and 181-192; these read DKSSGPWNKTSQAQA and SDTQFPSLQATA. Over residues 193–204 the composition is skewed to basic and acidic residues; that stretch reads KHTESRREKEME.

The protein belongs to the CDV3 family.

The protein resides in the cytoplasm. This chain is Protein CDV3 homolog A (cdv3-a), found in Xenopus laevis (African clawed frog).